The primary structure comprises 543 residues: Probable E3 ubiquitin-protein ligase ARI9 (543 aa).

The interval 1–26 is disordered; sequence MDFSDDDMIDNKSGEENYSYGGGNES. The tract at residues 124–332 is TRIAD supradomain; it reads VNIQCGICFE…RHSGACNRFV (209 aa). Residues Cys-128, Cys-131, Cys-145, His-147, Cys-150, Cys-153, Cys-173, Cys-178, Cys-217, Cys-222, Cys-240, Cys-242, Cys-247, Cys-250, His-255, Cys-260, Cys-287, and Cys-290 each coordinate Zn(2+). The segment at 128 to 178 adopts an RING-type 1 zinc-finger fold; it reads CGICFESYTREEIARVSCGHPYCKTCWAGYITTKIEDGPGCLRVKCPEPSC. The segment at 197–260 adopts an IBR-type zinc-finger fold; it reads EKYSRYILRS…SEDAHSPVDC (64 aa). An RING-type 2; atypical zinc finger spans residues 287–317; sequence CPECKRPIEKNDGCNHMTCSAPCGHEFCWIC. Cys-300 is a catalytic residue. Cys-305, Cys-309, Cys-314, Cys-317, His-324, and Cys-328 together coordinate Zn(2+).

Belongs to the RBR family. Ariadne subfamily. Zn(2+) serves as cofactor.

The catalysed reaction is [E2 ubiquitin-conjugating enzyme]-S-ubiquitinyl-L-cysteine + [acceptor protein]-L-lysine = [E2 ubiquitin-conjugating enzyme]-L-cysteine + [acceptor protein]-N(6)-ubiquitinyl-L-lysine.. It functions in the pathway protein modification; protein ubiquitination. Might act as an E3 ubiquitin-protein ligase, or as part of E3 complex, which accepts ubiquitin from specific E2 ubiquitin-conjugating enzymes and then transfers it to substrates. The polypeptide is Probable E3 ubiquitin-protein ligase ARI9 (ARI9) (Arabidopsis thaliana (Mouse-ear cress)).